The following is a 102-amino-acid chain: Aspartyl/glutamyl-tRNA(Asn/Gln) amidotransferase subunit C (102 aa).

This sequence belongs to the GatC family. As to quaternary structure, heterotrimer of A, B and C subunits.

The catalysed reaction is L-glutamyl-tRNA(Gln) + L-glutamine + ATP + H2O = L-glutaminyl-tRNA(Gln) + L-glutamate + ADP + phosphate + H(+). The enzyme catalyses L-aspartyl-tRNA(Asn) + L-glutamine + ATP + H2O = L-asparaginyl-tRNA(Asn) + L-glutamate + ADP + phosphate + 2 H(+). Functionally, allows the formation of correctly charged Asn-tRNA(Asn) or Gln-tRNA(Gln) through the transamidation of misacylated Asp-tRNA(Asn) or Glu-tRNA(Gln) in organisms which lack either or both of asparaginyl-tRNA or glutaminyl-tRNA synthetases. The reaction takes place in the presence of glutamine and ATP through an activated phospho-Asp-tRNA(Asn) or phospho-Glu-tRNA(Gln). This is Aspartyl/glutamyl-tRNA(Asn/Gln) amidotransferase subunit C from Bordetella petrii (strain ATCC BAA-461 / DSM 12804 / CCUG 43448).